Here is a 248-residue protein sequence, read N- to C-terminus: MSEQKVALVTGALGGIGSEICRQLVTAGYKIIATVVPREEDREKQWLQSEGFQDSDVRFVLTDLNNHEAATAAIQEAIAAEGRVDVLVNNAGITRDATFKKMSYEQWSQVIDTNLKTLFTVTQPVFNKMLEQKSGRIVNISSVNGLKGQFGQANYSASKAGIIGFTKALAQEGARSNICVNVVAPGYTATPMVTAMREDVIKSIEAQIPLQRLAAPAEIAAAVMYLVSEHGAYVTGETLSINGGLYMH.

Residues 14–16, R42, and 90–94 contribute to the NADP(+) site; these read GGI and NAGIT. Residues D96 and 149–152 each bind substrate; that span reads QFGQ. Y155 acts as the Proton acceptor in catalysis. NADP(+) is bound at residue 185–188; sequence PGYT. Residues 186 to 187 and R197 contribute to the substrate site; that span reads GY.

This sequence belongs to the short-chain dehydrogenases/reductases (SDR) family.

The protein resides in the cytoplasm. The enzyme catalyses a (3R)-3-hydroxyacyl-CoA + NADP(+) = a 3-oxoacyl-CoA + NADPH + H(+). The protein operates within biopolymer metabolism; poly-(R)-3-hydroxybutanoate biosynthesis. The protein is Acetoacetyl-CoA reductase (phaB) of Acinetobacter sp. (strain RA3849).